A 424-amino-acid chain; its full sequence is Serine hydroxymethyltransferase (424 aa).

Residues Leu126 and 130-132 each bind (6S)-5,6,7,8-tetrahydrofolate; that span reads GHL. Position 235 is an N6-(pyridoxal phosphate)lysine (Lys235). 359–361 serves as a coordination point for (6S)-5,6,7,8-tetrahydrofolate; the sequence is SPF.

The protein belongs to the SHMT family. Homodimer. Pyridoxal 5'-phosphate is required as a cofactor.

The protein resides in the cytoplasm. It carries out the reaction (6R)-5,10-methylene-5,6,7,8-tetrahydrofolate + glycine + H2O = (6S)-5,6,7,8-tetrahydrofolate + L-serine. It functions in the pathway one-carbon metabolism; tetrahydrofolate interconversion. The protein operates within amino-acid biosynthesis; glycine biosynthesis; glycine from L-serine: step 1/1. Functionally, catalyzes the reversible interconversion of serine and glycine with tetrahydrofolate (THF) serving as the one-carbon carrier. This reaction serves as the major source of one-carbon groups required for the biosynthesis of purines, thymidylate, methionine, and other important biomolecules. Also exhibits THF-independent aldolase activity toward beta-hydroxyamino acids, producing glycine and aldehydes, via a retro-aldol mechanism. The chain is Serine hydroxymethyltransferase from Prochlorococcus marinus (strain MIT 9303).